Here is a 76-residue protein sequence, read N- to C-terminus: UPF0235 protein MMAR_2910 (76 aa).

This sequence belongs to the UPF0235 family.

This Mycobacterium marinum (strain ATCC BAA-535 / M) protein is UPF0235 protein MMAR_2910.